The primary structure comprises 262 residues: Alpha/beta-gliadin A-I (262 aa).

The first 20 residues, 1–20, serve as a signal peptide directing secretion; sequence MKTFLILALLAIVATTATTA. 3 disordered regions span residues 51-73, 87-120, and 225-251; these read LGQQQPFPPQQPYPQPQPFPSQQ, PYSQPQPFRPQQPYPQPQPQYSQPQQPISQQQQQ, and YPLGQGSFRPSQQNPQAQGSVQPQQLP. Composition is skewed to pro residues over residues 56 to 71 and 93 to 104; these read PFPPQQPYPQPQPFPS and PFRPQQPYPQPQ. The span at 105 to 120 shows a compositional bias: low complexity; it reads PQYSQPQQPISQQQQQ. Over residues 232–251 the composition is skewed to polar residues; the sequence is FRPSQQNPQAQGSVQPQQLP.

It belongs to the gliadin/glutenin family. Post-translationally, substrate of transglutaminase.

Its function is as follows. Gliadin is the major seed storage protein in wheat. The chain is Alpha/beta-gliadin A-I from Triticum aestivum (Wheat).